Consider the following 273-residue polypeptide: Formamidopyrimidine-DNA glycosylase (273 aa).

P2 acts as the Schiff-base intermediate with DNA in catalysis. E3 serves as the catalytic Proton donor. K58 serves as the catalytic Proton donor; for beta-elimination activity. 2 residues coordinate DNA: H91 and R110. Residues 238-272 (QVYGKTDQPCARCATPIEKIKVGGRGTHFCPSCQK) form an FPG-type zinc finger. R262 functions as the Proton donor; for delta-elimination activity in the catalytic mechanism.

The protein belongs to the FPG family. Monomer. Requires Zn(2+) as cofactor.

The enzyme catalyses Hydrolysis of DNA containing ring-opened 7-methylguanine residues, releasing 2,6-diamino-4-hydroxy-5-(N-methyl)formamidopyrimidine.. It carries out the reaction 2'-deoxyribonucleotide-(2'-deoxyribose 5'-phosphate)-2'-deoxyribonucleotide-DNA = a 3'-end 2'-deoxyribonucleotide-(2,3-dehydro-2,3-deoxyribose 5'-phosphate)-DNA + a 5'-end 5'-phospho-2'-deoxyribonucleoside-DNA + H(+). Its function is as follows. Involved in base excision repair of DNA damaged by oxidation or by mutagenic agents. Acts as a DNA glycosylase that recognizes and removes damaged bases. Has a preference for oxidized purines, such as 7,8-dihydro-8-oxoguanine (8-oxoG). Has AP (apurinic/apyrimidinic) lyase activity and introduces nicks in the DNA strand. Cleaves the DNA backbone by beta-delta elimination to generate a single-strand break at the site of the removed base with both 3'- and 5'-phosphates. This Streptococcus mutans serotype c (strain ATCC 700610 / UA159) protein is Formamidopyrimidine-DNA glycosylase (mutM).